We begin with the raw amino-acid sequence, 981 residues long: Amidohydrolase tasK (981 aa).

The tract at residues 1–36 (MDDQKGPLPPYTPTATAPPPASMRQRRPPGRRRALR) is disordered. A compositionally biased stretch (pro residues) spans 7-21 (PLPPYTPTATAPPPA). Positions 24-36 (RQRRPPGRRRALR) are enriched in basic residues. The helical transmembrane segment at 40 to 57 (TVRVLALACLAFVVLAQW) threads the bilayer. The interval 86–107 (LRVRPQDPAGPGRSKNDRYLDG) is disordered. Fe(2+) contacts are provided by H187 and H189. Zn(2+)-binding residues include H187 and H189. A glycan (N-linked (GlcNAc...) asparagine) is linked at N407. The interval 819-838 (KKQQKQQQQQQQQQQQQHGT) is disordered. Over residues 823–835 (KQQQQQQQQQQQQ) the composition is skewed to low complexity. N891 is a glycosylation site (N-linked (GlcNAc...) asparagine).

This sequence belongs to the metallo-dependent hydrolases superfamily. Fe(2+) is required as a cofactor. Mn(2+) serves as cofactor. Requires Zn(2+) as cofactor.

The protein resides in the membrane. In terms of biological role, amidohydrolase; part of the gene cluster that mediates the biosynthesis of the tetramic acids Sch210971 and Sch210972, potential anti-HIV fungal natural product that contain a decalin core. The PKS module of tasS together with the enoylreductase tasC catalyze the formation of the polyketide unit which is then conjugated to 4-hydroxyl-4-methyl glutamate (HMG) by the condensation domain of the tasS NRPS module. One unique structural feature of Sch210971 and Sch210972 is the tetramic acid motif proposed to be derived from the non-proteinogenic amino acid HMG, by a Dieckmann-type condensation catalyzed by the reductase domain of tasS. The aldolase tasA catalyzes the aldol condensation of 2 molecules of pyruvic acid to yield the intermediate 4-hydroxyl-4-methyl-2-oxoglutarate (HMOG), which can then be stereoselectively transaminated, may be by tasG, to form HMG. The Diels-Alderase tas3 then uses the Dieckmann product of tasS as substrate and catalyzes the Diels-Alder cycloaddition to form the decalin ring of Sch210971 and Sch210972. The protein is Amidohydrolase tasK of Hapsidospora irregularis.